A 260-amino-acid chain; its full sequence is Adenosine 5'-phosphosulfate reductase (260 aa).

[4Fe-4S] cluster contacts are provided by Cys-130, Cys-131, Cys-213, and Cys-216. Cys-241 functions as the Nucleophile; cysteine thiosulfonate intermediate in the catalytic mechanism.

This sequence belongs to the PAPS reductase family. CysH subfamily. It depends on [4Fe-4S] cluster as a cofactor.

The protein localises to the cytoplasm. The enzyme catalyses [thioredoxin]-disulfide + sulfite + AMP + 2 H(+) = adenosine 5'-phosphosulfate + [thioredoxin]-dithiol. It functions in the pathway sulfur metabolism; hydrogen sulfide biosynthesis; sulfite from sulfate. In terms of biological role, catalyzes the formation of sulfite from adenosine 5'-phosphosulfate (APS) using thioredoxin as an electron donor. The protein is Adenosine 5'-phosphosulfate reductase of Agrobacterium fabrum (strain C58 / ATCC 33970) (Agrobacterium tumefaciens (strain C58)).